Reading from the N-terminus, the 175-residue chain is Large ribosomal subunit protein uL18 (175 aa).

The protein belongs to the universal ribosomal protein uL18 family. In terms of assembly, part of the 50S ribosomal subunit. Contacts the 5S and 23S rRNAs.

Its function is as follows. This is one of the proteins that bind and probably mediate the attachment of the 5S RNA into the large ribosomal subunit, where it forms part of the central protuberance. In Methanospirillum hungatei JF-1 (strain ATCC 27890 / DSM 864 / NBRC 100397 / JF-1), this protein is Large ribosomal subunit protein uL18.